A 189-amino-acid chain; its full sequence is Probable DNA-directed RNA polymerase subunit delta (189 aa).

Residues 14 to 81 (LSMIEVAHAI…GENVWALRTW (68 aa)) form the HTH HARE-type domain. Acidic residues-rich tracts occupy residues 90–100 (EVDHPEDDGDE) and 118–189 (EGDD…EDEE). The tract at residues 90–189 (EVDHPEDDGD…DDLDDDEDEE (100 aa)) is disordered.

This sequence belongs to the RpoE family. In terms of assembly, RNAP is composed of a core of 2 alpha, a beta and a beta' subunits. The core is associated with a delta subunit and one of several sigma factors.

Its function is as follows. Participates in both the initiation and recycling phases of transcription. In the presence of the delta subunit, RNAP displays an increased specificity of transcription, a decreased affinity for nucleic acids, and an increased efficiency of RNA synthesis because of enhanced recycling. The protein is Probable DNA-directed RNA polymerase subunit delta of Lactobacillus delbrueckii subsp. bulgaricus (strain ATCC 11842 / DSM 20081 / BCRC 10696 / JCM 1002 / NBRC 13953 / NCIMB 11778 / NCTC 12712 / WDCM 00102 / Lb 14).